The chain runs to 1218 residues: DNA polymerase subunit gamma-1 (1218 aa).

Positions Leu-31–Gly-50 are disordered. Positions Val-179 to Glu-183 match the Exo I motif. Asp-181 functions as the Exonuclease activity in the catalytic mechanism. Positions Val-250–Arg-258 match the Exo II motif. Ser-289 contributes to the DNA binding site. The short motif at Tyr-378–Thr-386 is the Exo III element. A disordered region spans residues Lys-484–Ser-524. Residues Ala-492 to Gly-553 are accessory-interacting determinant. Positions Met-507–Glu-520 are enriched in acidic residues. Arg-561 serves as a coordination point for RNA. Ser-575 contacts DNA. 3 residues coordinate RNA: His-733, Gly-742, and Lys-747. Positions 785 and 828 each coordinate DNA. The interval Thr-837 to Asn-843 is trigger loop. Residues Ser-842 and Arg-848 each contribute to the RNA site. The short motif at Val-866–Leu-875 is the Pol A element. Asp-869, Val-870, Ser-872, Glu-874, Arg-922, Lys-926, and Tyr-930 together coordinate a 2'-deoxyribonucleoside 5'-triphosphate. Mg(2+) contacts are provided by Asp-869 and Val-870. The short motif at Arg-922–Gly-937 is the Pol B element. Residues Thr-1073 and Ser-1074 each coordinate DNA. The short motif at His-1113 to Val-1120 is the Pol C element. Asp-1114 is a binding site for a 2'-deoxyribonucleoside 5'-triphosphate. Asp-1114 lines the Mg(2+) pocket.

The protein belongs to the DNA polymerase type-A family. In terms of assembly, heterotrimer composed of a catalytic subunit and a homodimer of accessory subunits (POLG:POLG2). Interacts with TTC3. Interacts with LIG3. Requires Mg(2+) as cofactor.

The protein resides in the mitochondrion. Its subcellular location is the mitochondrion matrix. It is found in the mitochondrion nucleoid. It catalyses the reaction DNA(n) + a 2'-deoxyribonucleoside 5'-triphosphate = DNA(n+1) + diphosphate. The catalysed reaction is a 3'-end 2'-deoxyribonucleotidyl-deoxyribonucleotide-DNA + H2O = a 3'-end 2'-deoxyribonucleotide-DNA + a 2'-deoxyribonucleoside 5'-phosphate + H(+). It carries out the reaction a 5'-end 2'-deoxyribose-2'-deoxyribonucleotide-DNA = (2E,4S)-4-hydroxypenten-2-al-5-phosphate + a 5'-end 5'-phospho-2'-deoxyribonucleoside-DNA + H(+). Its activity is regulated as follows. Inhibited by dideoxynucleotides such as antiviral agent zalcitabine. In terms of biological role, catalytic subunit of DNA polymerase gamma solely responsible for replication of mitochondrial DNA (mtDNA). Replicates both heavy and light strands of the circular mtDNA genome using a single-stranded DNA template, RNA primers and the four deoxyribonucleoside triphosphates as substrates. Has 5' -&gt; 3' polymerase activity. Functionally interacts with TWNK and SSBP1 at the replication fork to form a highly processive replisome, where TWNK unwinds the double-stranded DNA template prior to replication and SSBP1 covers the parental heavy strand to enable continuous replication of the entire mitochondrial genome. A single nucleotide incorporation cycle includes binding of the incoming nucleotide at the insertion site, a phosphodiester bond formation reaction that extends the 3'-end of the primer DNA, and translocation of the primer terminus to the post-insertion site. After completing replication of a mtDNA strand, mediates 3' -&gt; 5' exonucleolytic degradation at the nick to enable proper ligation. Highly accurate due to high nucleotide selectivity and 3' -&gt; 5' exonucleolytic proofreading. Proficiently corrects base substitutions, single-base additions and deletions in non-repetitive sequences and short repeats, but displays lower proofreading activity when replicating longer homopolymeric stretches. Exerts exonuclease activity toward single-stranded DNA and double-stranded DNA containing 3'-terminal mispairs. When a misincorporation occurs, transitions from replication to a pro-nucleolytic editing mode and removes the missincorporated nucleoside in the exonuclease active site. Proceeds via an SN2 nucleolytic mechanism in which Asp-198 catalyzes phosphodiester bond hydrolysis and Glu-200 stabilizes the leaving group. As a result the primer strand becomes one nucleotide shorter and is positioned in the post-insertion site, ready to resume DNA synthesis. Exerts 5'-deoxyribose phosphate (dRP) lyase activity and mediates repair-associated mtDNA synthesis (gap filling) in base-excision repair pathway. Catalyzes the release of the 5'-terminal 2-deoxyribose-5-phosphate sugar moiety from incised apurinic/apyrimidinic (AP) sites to produce a substrate for DNA ligase. The dRP lyase reaction does not require divalent metal ions and likely proceeds via a Schiff base intermediate in a beta-elimination reaction mechanism. The protein is DNA polymerase subunit gamma-1 of Mus musculus (Mouse).